The sequence spans 379 residues: 1-deoxy-D-xylulose 5-phosphate reductoisomerase (379 aa).

Positions 10, 11, 12, 13, 38, 39, and 121 each coordinate NADPH. Lys-122 contacts 1-deoxy-D-xylulose 5-phosphate. Glu-123 is an NADPH binding site. Position 147 (Asp-147) interacts with Mn(2+). Residues Ser-148, Glu-149, Ser-173, and His-196 each contribute to the 1-deoxy-D-xylulose 5-phosphate site. Glu-149 contributes to the Mn(2+) binding site. Gly-202 is a binding site for NADPH. Ser-209, Asn-214, Lys-215, and Glu-218 together coordinate 1-deoxy-D-xylulose 5-phosphate. Glu-218 contributes to the Mn(2+) binding site.

The protein belongs to the DXR family. Mg(2+) serves as cofactor. Requires Mn(2+) as cofactor.

It catalyses the reaction 2-C-methyl-D-erythritol 4-phosphate + NADP(+) = 1-deoxy-D-xylulose 5-phosphate + NADPH + H(+). It participates in isoprenoid biosynthesis; isopentenyl diphosphate biosynthesis via DXP pathway; isopentenyl diphosphate from 1-deoxy-D-xylulose 5-phosphate: step 1/6. In terms of biological role, catalyzes the NADPH-dependent rearrangement and reduction of 1-deoxy-D-xylulose-5-phosphate (DXP) to 2-C-methyl-D-erythritol 4-phosphate (MEP). This is 1-deoxy-D-xylulose 5-phosphate reductoisomerase from Chlamydia trachomatis serovar A (strain ATCC VR-571B / DSM 19440 / HAR-13).